Here is a 90-residue protein sequence, read N- to C-terminus: Small ribosomal subunit protein uS17 (90 aa).

This sequence belongs to the universal ribosomal protein uS17 family. Part of the 30S ribosomal subunit.

One of the primary rRNA binding proteins, it binds specifically to the 5'-end of 16S ribosomal RNA. The polypeptide is Small ribosomal subunit protein uS17 (Gluconobacter oxydans (strain 621H) (Gluconobacter suboxydans)).